A 331-amino-acid polypeptide reads, in one-letter code: Ketol-acid reductoisomerase (NADP(+)) (331 aa).

Residues 2 to 182 (ARMYYDADAN…GGTRAGILET (181 aa)) form the KARI N-terminal Rossmann domain. Residues 25–28 (YGSQ), S51, S53, and 83–86 (DEVQ) contribute to the NADP(+) site. H108 is a catalytic residue. G134 lines the NADP(+) pocket. A KARI C-terminal knotted domain is found at 183–328 (SFREETETDL…KDLRAMFSWL (146 aa)). Positions 191, 195, 227, and 231 each coordinate Mg(2+). Residue S252 participates in substrate binding.

Belongs to the ketol-acid reductoisomerase family. It depends on Mg(2+) as a cofactor.

It catalyses the reaction (2R)-2,3-dihydroxy-3-methylbutanoate + NADP(+) = (2S)-2-acetolactate + NADPH + H(+). The enzyme catalyses (2R,3R)-2,3-dihydroxy-3-methylpentanoate + NADP(+) = (S)-2-ethyl-2-hydroxy-3-oxobutanoate + NADPH + H(+). It functions in the pathway amino-acid biosynthesis; L-isoleucine biosynthesis; L-isoleucine from 2-oxobutanoate: step 2/4. It participates in amino-acid biosynthesis; L-valine biosynthesis; L-valine from pyruvate: step 2/4. Its function is as follows. Involved in the biosynthesis of branched-chain amino acids (BCAA). Catalyzes an alkyl-migration followed by a ketol-acid reduction of (S)-2-acetolactate (S2AL) to yield (R)-2,3-dihydroxy-isovalerate. In the isomerase reaction, S2AL is rearranged via a Mg-dependent methyl migration to produce 3-hydroxy-3-methyl-2-ketobutyrate (HMKB). In the reductase reaction, this 2-ketoacid undergoes a metal-dependent reduction by NADPH to yield (R)-2,3-dihydroxy-isovalerate. The polypeptide is Ketol-acid reductoisomerase (NADP(+)) (Crocosphaera subtropica (strain ATCC 51142 / BH68) (Cyanothece sp. (strain ATCC 51142))).